Reading from the N-terminus, the 101-residue chain is Large ribosomal subunit protein uL23 (101 aa).

The protein belongs to the universal ribosomal protein uL23 family. Part of the 50S ribosomal subunit. Contacts protein L29, and trigger factor when it is bound to the ribosome.

Functionally, one of the early assembly proteins it binds 23S rRNA. One of the proteins that surrounds the polypeptide exit tunnel on the outside of the ribosome. Forms the main docking site for trigger factor binding to the ribosome. This is Large ribosomal subunit protein uL23 from Corynebacterium kroppenstedtii (strain DSM 44385 / JCM 11950 / CIP 105744 / CCUG 35717).